We begin with the raw amino-acid sequence, 330 residues long: (4-{4-[2-(gamma-L-glutamylamino)ethyl]phenoxymethyl}furan-2-yl)methanamine synthase (330 aa).

It belongs to the MfnF family.

The enzyme catalyses gamma-L-glutamyltyramine + [5-(aminomethyl)furan-3-yl]methyl diphosphate = (4-{4-[2-(gamma-L-glutamylamino)ethyl]phenoxymethyl}furan-2-yl)methanamine + diphosphate. The protein operates within cofactor biosynthesis; methanofuran biosynthesis. In terms of biological role, catalyzes the condensation between 5-(aminomethyl)-3-furanmethanol diphosphate (F1-PP) and gamma-glutamyltyramine to produce APMF-Glu. This is (4-{4-[2-(gamma-L-glutamylamino)ethyl]phenoxymethyl}furan-2-yl)methanamine synthase from Methanocaldococcus jannaschii (strain ATCC 43067 / DSM 2661 / JAL-1 / JCM 10045 / NBRC 100440) (Methanococcus jannaschii).